Reading from the N-terminus, the 431-residue chain is Bifunctional protein GlmU (431 aa).

A pyrophosphorylase region spans residues 1–223; that stretch reads MNLSIVILAA…EENFKGVNSK (223 aa). Residues 8-11, lysine 22, glutamine 74, and 81-82 contribute to the UDP-N-acetyl-alpha-D-glucosamine site; these read LAAG and GT. A Mg(2+)-binding site is contributed by aspartate 102. UDP-N-acetyl-alpha-D-glucosamine is bound by residues glycine 135, glutamate 149, asparagine 164, and asparagine 221. Position 221 (asparagine 221) interacts with Mg(2+). The tract at residues 224 to 244 is linker; sequence ADLAEAEAIMTGRIRRRWMRE. An N-acetyltransferase region spans residues 245–431; the sequence is GVRMRLPETI…FFARYFSSSK (187 aa). UDP-N-acetyl-alpha-D-glucosamine contacts are provided by arginine 308 and lysine 325. The Proton acceptor role is filled by histidine 336. Residues tyrosine 339 and asparagine 350 each coordinate UDP-N-acetyl-alpha-D-glucosamine. Acetyl-CoA is bound by residues alanine 353, 359–360, serine 378, alanine 396, and arginine 413; that span reads NY.

It in the N-terminal section; belongs to the N-acetylglucosamine-1-phosphate uridyltransferase family. In the C-terminal section; belongs to the transferase hexapeptide repeat family. Homotrimer. Mg(2+) serves as cofactor.

The protein resides in the cytoplasm. It catalyses the reaction alpha-D-glucosamine 1-phosphate + acetyl-CoA = N-acetyl-alpha-D-glucosamine 1-phosphate + CoA + H(+). The enzyme catalyses N-acetyl-alpha-D-glucosamine 1-phosphate + UTP + H(+) = UDP-N-acetyl-alpha-D-glucosamine + diphosphate. The protein operates within nucleotide-sugar biosynthesis; UDP-N-acetyl-alpha-D-glucosamine biosynthesis; N-acetyl-alpha-D-glucosamine 1-phosphate from alpha-D-glucosamine 6-phosphate (route II): step 2/2. It participates in nucleotide-sugar biosynthesis; UDP-N-acetyl-alpha-D-glucosamine biosynthesis; UDP-N-acetyl-alpha-D-glucosamine from N-acetyl-alpha-D-glucosamine 1-phosphate: step 1/1. Its pathway is bacterial outer membrane biogenesis; LPS lipid A biosynthesis. Its function is as follows. Catalyzes the last two sequential reactions in the de novo biosynthetic pathway for UDP-N-acetylglucosamine (UDP-GlcNAc). The C-terminal domain catalyzes the transfer of acetyl group from acetyl coenzyme A to glucosamine-1-phosphate (GlcN-1-P) to produce N-acetylglucosamine-1-phosphate (GlcNAc-1-P), which is converted into UDP-GlcNAc by the transfer of uridine 5-monophosphate (from uridine 5-triphosphate), a reaction catalyzed by the N-terminal domain. The chain is Bifunctional protein GlmU from Wolinella succinogenes (strain ATCC 29543 / DSM 1740 / CCUG 13145 / JCM 31913 / LMG 7466 / NCTC 11488 / FDC 602W) (Vibrio succinogenes).